Here is a 434-residue protein sequence, read N- to C-terminus: MEFLDLGPFSRASGTIRLPGSKSISNRVLLLAALAEGETTITNLLDSDDTRVMLDALEKLGVRLKRDGDTCVVTGTRGAFTARTADLFLGNAGTAVRPLTAALAVNGGDYRIHGVPRMHERPIGDLVDGLRQLGARIDYEENEGYPPLRIRPGQINADAPITVRGDVSSQFLTSLLMTLPLLRTESGVSTVQVDGELISKPYIEITIKLMERFGIKVERHGWHQFVVPAGQRYQSPGTIMVEGDASSASYFLAAGALGGGPLRVEGVGRASIQGDVGFADALIKMGANLQMGDDWIEVRGVGHDSGKLEPIDMDCNLIPDAAMTIAVAALFADGATTLRNIASWRVKETDRLAAMATELRKVGAKVQEGEDYLVIEPPEKLTPNAAIDTYDDHRMAMCFSLVSLGGVPVRINDPKCVGKTFPDYFERFTALAQP.

3-phosphoshikimate-binding residues include lysine 22, serine 23, and arginine 27. Position 22 (lysine 22) interacts with phosphoenolpyruvate. Residues glycine 93 and arginine 121 each coordinate phosphoenolpyruvate. 3-phosphoshikimate-binding residues include serine 168, serine 169, glutamine 170, serine 199, aspartate 320, and lysine 347. Glutamine 170 is a binding site for phosphoenolpyruvate. Aspartate 320 serves as the catalytic Proton acceptor. Phosphoenolpyruvate is bound by residues arginine 351, arginine 394, and lysine 419.

Belongs to the EPSP synthase family. Monomer.

It localises to the cytoplasm. It catalyses the reaction 3-phosphoshikimate + phosphoenolpyruvate = 5-O-(1-carboxyvinyl)-3-phosphoshikimate + phosphate. It participates in metabolic intermediate biosynthesis; chorismate biosynthesis; chorismate from D-erythrose 4-phosphate and phosphoenolpyruvate: step 6/7. In terms of biological role, catalyzes the transfer of the enolpyruvyl moiety of phosphoenolpyruvate (PEP) to the 5-hydroxyl of shikimate-3-phosphate (S3P) to produce enolpyruvyl shikimate-3-phosphate and inorganic phosphate. The sequence is that of 3-phosphoshikimate 1-carboxyvinyltransferase from Paraburkholderia phytofirmans (strain DSM 17436 / LMG 22146 / PsJN) (Burkholderia phytofirmans).